Consider the following 376-residue polypeptide: MSVRRVVVLGITGSIGAAALKLLRRFPDRFLLVGASGHRQTEYARALAREFSLSDITMTGSCSEQEGRARIKRLLSSCEAEVVVNGIAGAAGLFASLEVLKTRCTLALANKESVVLAASLLHAAARESGATIVPVDSEHAAIFQLIAAHGAHAVAQVVLTASGGPFRTFSKECLAHVTVEDALQHPTWRMGKKISVDSATLANKALEVIEAVQFFRIPVDRVTVVVHPQSIVHALVQCHSGETYAQLSVPDMASPLLYALLYPDAPPAYQTPLDFTSGLSLHFEPPRVDDFPLLRMGFDVARAQRAYPIAFNAANEEAVRAFLQRNIGFLDIAHVTAQALQEDWRAIPQTFEEVMACDTRARMCARTCIAQRWRER.

NADPH contacts are provided by T12, G13, S14, I15, R39, Q40, and N110. Position 111 (K111) interacts with 1-deoxy-D-xylulose 5-phosphate. E112 provides a ligand contact to NADPH. D136 serves as a coordination point for Mn(2+). Residues S137, E138, S162, and H185 each coordinate 1-deoxy-D-xylulose 5-phosphate. E138 provides a ligand contact to Mn(2+). G191 contacts NADPH. 1-deoxy-D-xylulose 5-phosphate-binding residues include S198, N203, K204, and E207. Residue E207 coordinates Mn(2+).

The protein belongs to the DXR family. It depends on Mg(2+) as a cofactor. Mn(2+) serves as cofactor.

It carries out the reaction 2-C-methyl-D-erythritol 4-phosphate + NADP(+) = 1-deoxy-D-xylulose 5-phosphate + NADPH + H(+). The protein operates within isoprenoid biosynthesis; isopentenyl diphosphate biosynthesis via DXP pathway; isopentenyl diphosphate from 1-deoxy-D-xylulose 5-phosphate: step 1/6. In terms of biological role, catalyzes the NADPH-dependent rearrangement and reduction of 1-deoxy-D-xylulose-5-phosphate (DXP) to 2-C-methyl-D-erythritol 4-phosphate (MEP). This is 1-deoxy-D-xylulose 5-phosphate reductoisomerase from Treponema pallidum (strain Nichols).